We begin with the raw amino-acid sequence, 250 residues long: 2-C-methyl-D-erythritol 4-phosphate cytidylyltransferase (250 aa).

The protein belongs to the IspD/TarI cytidylyltransferase family. IspD subfamily.

It carries out the reaction 2-C-methyl-D-erythritol 4-phosphate + CTP + H(+) = 4-CDP-2-C-methyl-D-erythritol + diphosphate. It participates in isoprenoid biosynthesis; isopentenyl diphosphate biosynthesis via DXP pathway; isopentenyl diphosphate from 1-deoxy-D-xylulose 5-phosphate: step 2/6. In terms of biological role, catalyzes the formation of 4-diphosphocytidyl-2-C-methyl-D-erythritol from CTP and 2-C-methyl-D-erythritol 4-phosphate (MEP). In Streptomyces avermitilis (strain ATCC 31267 / DSM 46492 / JCM 5070 / NBRC 14893 / NCIMB 12804 / NRRL 8165 / MA-4680), this protein is 2-C-methyl-D-erythritol 4-phosphate cytidylyltransferase.